Consider the following 549-residue polypeptide: Glucose-6-phosphate isomerase (549 aa).

Glu355 acts as the Proton donor in catalysis. Catalysis depends on residues His386 and Lys514.

Belongs to the GPI family.

Its subcellular location is the cytoplasm. It catalyses the reaction alpha-D-glucose 6-phosphate = beta-D-fructose 6-phosphate. It participates in carbohydrate biosynthesis; gluconeogenesis. It functions in the pathway carbohydrate degradation; glycolysis; D-glyceraldehyde 3-phosphate and glycerone phosphate from D-glucose: step 2/4. In terms of biological role, catalyzes the reversible isomerization of glucose-6-phosphate to fructose-6-phosphate. The chain is Glucose-6-phosphate isomerase from Klebsiella pneumoniae (strain 342).